Here is a 477-residue protein sequence, read N- to C-terminus: Adenylyl cyclase-associated protein 2 (477 aa).

Ala-2 is subject to N-acetylalanine. Disordered stretches follow at residues Leu-225–Ser-261 and Thr-274–His-321. Over residues Gly-230–Leu-246 the composition is skewed to pro residues. Low complexity predominate over residues Gln-298 to Lys-320. 2 positions are modified to phosphoserine: Ser-301 and Ser-309. In terms of domain architecture, C-CAP/cofactor C-like spans Pro-317 to Ile-455.

The protein belongs to the CAP family.

The protein localises to the cell membrane. Involved in the regulation of actin polymerization. The chain is Adenylyl cyclase-associated protein 2 (CAP2) from Homo sapiens (Human).